The sequence spans 82 residues: ATP synthase subunit c, chloroplastic (82 aa).

2 helical membrane-spanning segments follow: residues 4–24 (IISAASVIAAGLAVGLAAIGP) and 57–77 (LAFMESLTIYGLVVALSLLFA).

It belongs to the ATPase C chain family. As to quaternary structure, F-type ATPases have 2 components, F(1) - the catalytic core - and F(0) - the membrane proton channel. F(1) has five subunits: alpha(3), beta(3), gamma(1), delta(1), epsilon(1). F(0) has four main subunits: a(1), b(1), b'(1) and c(10-14). The alpha and beta chains form an alternating ring which encloses part of the gamma chain. F(1) is attached to F(0) by a central stalk formed by the gamma and epsilon chains, while a peripheral stalk is formed by the delta, b and b' chains.

The protein localises to the plastid. The protein resides in the chloroplast thylakoid membrane. F(1)F(0) ATP synthase produces ATP from ADP in the presence of a proton or sodium gradient. F-type ATPases consist of two structural domains, F(1) containing the extramembraneous catalytic core and F(0) containing the membrane proton channel, linked together by a central stalk and a peripheral stalk. During catalysis, ATP synthesis in the catalytic domain of F(1) is coupled via a rotary mechanism of the central stalk subunits to proton translocation. In terms of biological role, key component of the F(0) channel; it plays a direct role in translocation across the membrane. A homomeric c-ring of between 10-14 subunits forms the central stalk rotor element with the F(1) delta and epsilon subunits. This Antithamnion sp. (Red alga) protein is ATP synthase subunit c, chloroplastic.